A 114-amino-acid polypeptide reads, in one-letter code: MDPFSQLSQLQHNLQAMTKTVAGLENDMLEVLKENTELKVENQLLREKISKLDANKEPAENKSQAGLKSLRNIYDSGYHICNMYYGSHRESGEDCMFCLDILDNFVNHGQKSRG.

Zn(2+) contacts are provided by His79, Cys81, Cys95, and Cys98.

Belongs to the YabA family. In terms of assembly, homotetramer. Interacts with both DnaA and DnaN, acting as a bridge between these two proteins. The cofactor is Zn(2+).

It is found in the cytoplasm. The protein resides in the nucleoid. Involved in control of chromosome replication initiation. Inhibits the cooperative binding of DnaA to the oriC region, thus negatively regulating initiation of chromosome replication. Inhibits the ability of DnaA-ATP to form a helix on DNA; does not disassemble preformed DnaA-DNA helices. Decreases the residence time of DnaA on the chromosome at its binding sites (oriC, replication forks and promoter-binding sites). Tethers DnaA to the replication machinery via the DNA polymerase beta sliding clamp subunit (dnaN). Associates with oriC and other DnaA targets on the chromosome in a DnaA-dependent manner. This Lactobacillus johnsonii (strain CNCM I-12250 / La1 / NCC 533) protein is Replication initiation control protein YabA.